Consider the following 1070-residue polypeptide: Envelopment polyprotein (1070 aa).

The signal sequence occupies residues 1–17 (MMFSRVMQLALICAVTC). At 18 to 457 (EDNPCLWERF…SNPQCYPYGK (440 aa)) the chain is on the lumenal side. 8 disulfides stabilise this stretch: Cys-22/Cys-55, Cys-152/Cys-165, Cys-211/Cys-221, Cys-267/Cys-309, Cys-296/Cys-301, Cys-353/Cys-356, Cys-360/Cys-429, and Cys-380/Cys-385. Asn-269 carries an N-linked (GlcNAc...) asparagine; by host glycan. A helical transmembrane segment spans residues 458–478 (WFLLFLILATLYIIVALLKTI). Over 479-536 (MRIFMACLSVLYGPFIIIIKISRCLGRLGKRKGERTYVRLMEALDDERKPEVVRAPVS) the chain is Cytoplasmic. Positions 480-522 (RIFMACLSVLYGPFIIIIKISRCLGRLGKRKGERTYVRLMEAL) are golgi retention signal. Residues 541–560 (KQPRIVLFIVLALLVHMALC) are internal signal sequence for glycoprotein C. Positions 550–560 (VLALLVHMALC) are excised as a propeptide. Residues 550–1023 (VLALLVHMAL…NWLDTLFGAS (474 aa)) lie on the Lumenal side of the membrane. Disulfide bonds link Cys-561/Cys-602, Cys-574/Cys-584, Cys-642/Cys-831, Cys-648/Cys-696, Cys-654/Cys-703, Cys-659/Cys-685, Cys-689/Cys-694, Cys-799/Cys-813, Cys-896/Cys-966, and Cys-906/Cys-909. The fusion loop stretch occupies residues 648–654 (CRWAGSC). Positions 690–701 (GGAACGCFNAAP) are fusion loop. A helical membrane pass occupies residues 1024–1044 (LLGKILGIGLAILSPFILILI). Over 1045 to 1070 (LRWILRVVLRRSRIRREPKYEMAKYS) the chain is Cytoplasmic.

Belongs to the phlebovirus envelope glycoprotein family. In terms of assembly, heterodimer with glycoprotein C. Heterodimer with glycoprotein N. Homotrimer (postfusion). Post-translationally, specific enzymatic cleavages in vivo yield mature proteins Glycoprotein C, and Glycoprotein N. In terms of processing, glycosylated. Palmitoylated.

It localises to the virion membrane. It is found in the host Golgi apparatus membrane. Its subcellular location is the host endoplasmic reticulum membrane. In terms of biological role, structural component of the virion that interacts with glycoprotein C. It shields the hydrophobic fusion loops of the glycoprotein C, preventing premature fusion. The glycoprotein protrusions are arranged on an icosahedral lattice, with T=12 triangulation. They are able to attach the virion to the host cell receptor CD209/DC-SIGN and to promote fusion of membranes with the late endosome after endocytosis of the virion. Plays a role in the packaging of ribonucleoproteins during virus assembly. Functionally, structural component of the virion that interacts with glycoprotein N. Acts as a class II fusion protein that is activated upon acidification and subsequent repositioning of the glycoprotein N. The glycoprotein protrusions are arranged on an icosahedral lattice, with T=12 triangulation. They are able to attach the virion to the host cell receptor CD209/DC-SIGN and to promote fusion of membranes with the late endosome after endocytosis of the virion. The chain is Envelopment polyprotein (GP) from Amblyomma variegatum (Tropical bont tick).